We begin with the raw amino-acid sequence, 742 residues long: mRNA export factor ICP27 homolog (742 aa).

Residues 1-11 (MELHSRGRHDA) show a composition bias toward basic and acidic residues. Residues 1 to 202 (MELHSRGRHD…NHHGSSAGPQ (202 aa)) form a disordered region. The span at 72 to 85 (SHHHRPCVPARRPR) shows a compositional bias: basic residues. The segment covering 153–171 (KSYDNDDGEPHHHGGDSTH) has biased composition (basic and acidic residues). Positions 179-202 (CPTTFGSSHPSSANNHHGSSAGPQ) are enriched in polar residues. Zn(2+) is bound by residues C387, H494, C496, and C501. Residues 387–501 (CILDHQDGWG…QCHECQNEMC (115 aa)) form a CHC2-type zinc finger. Residues 540–742 (ASNHATAGGQ…MLCYSDDMDD (203 aa)) are disordered. Over residues 578-587 (YDKKDREGSH) the composition is skewed to basic and acidic residues. Residues 614–626 (GELEEDEDSDDAS) show a composition bias toward acidic residues. Over residues 692 to 703 (QSANGNHSTTAT) the composition is skewed to polar residues.

Belongs to the HHV-1 ICP27 protein family. Self-associates and forms high-molecular-mass complexes. Interacts with host DDX39A and DDX39B; these interactions are required for UL69 function in mRNA export. Interacts with host SUPT6H, EIF4A1 and PABPC1. Post-translationally, phosphorylated by UL97 and host CDK1, CDK7 and CD9. Phosphorylation by CDKs impacts on UL69 nuclear localization and activity.

It localises to the virion tegument. The protein localises to the virion. The protein resides in the host nucleus. Its subcellular location is the host cytoplasm. In terms of biological role, immediate early (EI) protein that plays many roles during productive infection including regulation of host cell cycle progression, regulation of viral gene expression or nuclear export of intronless viral RNAs. Acts as a transcriptional transactivator via interaction with the cellular transcription elongation factor SUPT6H and as a nuclear RNA export factor via interaction with UAP56, a component of the cellular mRNA export machinery. This Human cytomegalovirus (strain Merlin) (HHV-5) protein is mRNA export factor ICP27 homolog.